Here is a 466-residue protein sequence, read N- to C-terminus: Cysteine--tRNA ligase (466 aa).

Zn(2+) is bound at residue Cys28. The 'HIGH' region signature appears at 30–40 (PTVYNYIHIGN). Zn(2+) contacts are provided by Cys208, His233, and Glu237. Residues 265–269 (KMSKS) carry the 'KMSKS' region motif. Lys268 is a binding site for ATP.

Belongs to the class-I aminoacyl-tRNA synthetase family. As to quaternary structure, monomer. Zn(2+) serves as cofactor.

The protein resides in the cytoplasm. The catalysed reaction is tRNA(Cys) + L-cysteine + ATP = L-cysteinyl-tRNA(Cys) + AMP + diphosphate. This Staphylococcus aureus (strain bovine RF122 / ET3-1) protein is Cysteine--tRNA ligase.